Consider the following 550-residue polypeptide: Membrane protein insertase YidC (550 aa).

The helical transmembrane segment at 6–26 (LIVFIVLSFGLLFVWQEYFAP) threads the bilayer. A disordered region spans residues 30 to 59 (PKPVAAAVQPDGTPAPATARPADSPATGKL). The next 4 helical transmembrane spans lie at 360–380 (WGWA…PLSA), 430–450 (LPIV…LASV), 472–492 (ILPA…PPPA), and 504–524 (PLAF…YWLV).

Belongs to the OXA1/ALB3/YidC family. Type 1 subfamily. In terms of assembly, interacts with the Sec translocase complex via SecD. Specifically interacts with transmembrane segments of nascent integral membrane proteins during membrane integration.

It is found in the cell inner membrane. In terms of biological role, required for the insertion and/or proper folding and/or complex formation of integral membrane proteins into the membrane. Involved in integration of membrane proteins that insert both dependently and independently of the Sec translocase complex, as well as at least some lipoproteins. Aids folding of multispanning membrane proteins. The protein is Membrane protein insertase YidC of Laribacter hongkongensis (strain HLHK9).